Here is a 1499-residue protein sequence, read N- to C-terminus: Collagen alpha-2(V) chain (1499 aa).

Positions 1 to 26 (MMANWAEARPLLILIVLLGQFVSIKA) are cleaved as a signal peptide. A VWFC domain is found at 39–97 (IACTQNGQMYLNRDIWKPAPCQICVCDNGAILCDKIECQDVLDCADPVTPPGECCPVCS). The interval 104 to 1268 (NTNFGRGRKG…DDKNKTDPGV (1165 aa)) is disordered. A compositionally biased stretch (pro residues) spans 170–182 (PGAPGPPGHPSHP). Low complexity predominate over residues 212–227 (PGSVGPVGPRGPQGLQ). Over residues 236–248 (TGPPGEPGDPGPM) the composition is skewed to pro residues. 3 positions are modified to hydroxyproline: Pro290, Pro293, and Pro296. 2 stretches are compositionally biased toward low complexity: residues 322–340 (EAGP…PRGM) and 427–443 (TPGA…SGPP). The Cell attachment site motif lies at 506-508 (RGD). Composition is skewed to low complexity over residues 604–626 (SIGI…SGDP) and 694–709 (DQGV…PLGP). A hydroxyproline mark is found at Pro611 and Pro617. Residues 710–721 (RGERGNPGERGE) show a composition bias toward basic and acidic residues. Gly residues predominate over residues 732 to 741 (GMAGGHGPDG). Over residues 742–758 (PKGSPGPSGTPGDTGPP) the composition is skewed to low complexity. Positions 776-787 (KGDRGGIGEKGA) are enriched in basic and acidic residues. A compositionally biased stretch (low complexity) spans 826–841 (PPGSRGNPGSRGENGP). Residues 894–903 (GLKGGRGTQG) are compositionally biased toward gly residues. A 3-hydroxyproline; partial modification is found at Pro919. Positions 919–929 (PPGPAGAPGPA) are enriched in pro residues. 6 consecutive short sequence motifs (cell attachment site) follow at residues 944-946 (RGD), 1067-1069 (RGD), 1070-1072 (RGD), 1100-1102 (RGD), 1127-1129 (RGD), and 1136-1138 (RGD). Residues 1063–1072 (AVGERGDRGD) show a composition bias toward basic and acidic residues. The span at 1093 to 1114 (APGDAGQRGDPGSRGPIGPPGR) shows a compositional bias: low complexity. A compositionally biased stretch (basic and acidic residues) spans 1127-1141 (RGDKGDHGDRGDRGQ). Pro1156 bears the 3-hydroxyproline; partial mark. Pro residues-rich tracts occupy residues 1171–1181 (PFGPRGPPGPV) and 1211–1226 (EGPP…PGPP). The propeptide at 1230 to 1499 (TAALGDIMGH…GVEIGPVCFV (270 aa)) is C-terminal propeptide. N-linked (GlcNAc...) asparagine glycosylation occurs at Asn1262. The region spanning 1266–1499 (PGVHATLKSL…GVEIGPVCFV (234 aa)) is the Fibrillar collagen NC1 domain. Disulfide bonds link Cys1296–Cys1328, Cys1336–Cys1497, and Cys1405–Cys1450. The Ca(2+) site is built by Asp1314, Asn1316, Gln1317, and Asp1322. An N-linked (GlcNAc...) asparagine glycan is attached at Asn1400.

Belongs to the fibrillar collagen family. In terms of assembly, trimers of two alpha 1(V) and one alpha 2(V) chains in most tissues and trimers of one alpha 1(V), one alpha 2(V), and one alpha 3(V) chains in placenta. Prolines at the third position of the tripeptide repeating unit (G-X-P) are hydroxylated in some or all of the chains. Probably 3-hydroxylated on Pro-919 and Pro-1156 by LEPREL1.

It is found in the secreted. The protein resides in the extracellular space. The protein localises to the extracellular matrix. Functionally, type V collagen is a member of group I collagen (fibrillar forming collagen). It is a minor connective tissue component of nearly ubiquitous distribution. Type V collagen binds to DNA, heparan sulfate, thrombospondin, heparin, and insulin. Type V collagen is a key determinant in the assembly of tissue-specific matrices. This is Collagen alpha-2(V) chain (COL5A2) from Homo sapiens (Human).